Reading from the N-terminus, the 217-residue chain is Adenylate kinase (217 aa).

Residue 11 to 16 (GAGKGT) coordinates ATP. Residues 31 to 60 (STGDMFREAMANKTPVGLEAKSYIDKGDLV) are NMP. Residues Thr-32, Arg-37, 58-60 (DLV), 86-89 (GFPR), and Gln-93 contribute to the AMP site. The tract at residues 127–165 (ARFMCKNCGATYNKFSKKPKVEGTCDRCGGHEFYQREDD) is LID. Residue Arg-128 coordinates ATP. 2 residues coordinate Zn(2+): Cys-131 and Cys-134. 137-138 (TY) contributes to the ATP binding site. Zn(2+) is bound by residues Cys-151 and Cys-154. AMP-binding residues include Arg-162 and Arg-173. Gln-201 lines the ATP pocket.

This sequence belongs to the adenylate kinase family. In terms of assembly, monomer.

It is found in the cytoplasm. It catalyses the reaction AMP + ATP = 2 ADP. It functions in the pathway purine metabolism; AMP biosynthesis via salvage pathway; AMP from ADP: step 1/1. Catalyzes the reversible transfer of the terminal phosphate group between ATP and AMP. Plays an important role in cellular energy homeostasis and in adenine nucleotide metabolism. This Lactobacillus delbrueckii subsp. bulgaricus (strain ATCC 11842 / DSM 20081 / BCRC 10696 / JCM 1002 / NBRC 13953 / NCIMB 11778 / NCTC 12712 / WDCM 00102 / Lb 14) protein is Adenylate kinase.